The sequence spans 111 residues: Large ribosomal subunit protein P2 (111 aa).

Positions 81–111 (AAGGAAAPAAEEKKEEEKEESDEDMGFGLFD) are disordered. Ser101 carries the phosphoserine modification.

This sequence belongs to the eukaryotic ribosomal protein P1/P2 family. P1 and P2 exist as dimers at the large ribosomal subunit.

Functionally, plays an important role in the elongation step of protein synthesis. This Aspergillus fumigatus (strain ATCC MYA-4609 / CBS 101355 / FGSC A1100 / Af293) (Neosartorya fumigata) protein is Large ribosomal subunit protein P2.